The chain runs to 166 residues: NAD(P)H-quinone oxidoreductase subunit I, chloroplastic (166 aa).

2 consecutive 4Fe-4S ferredoxin-type domains span residues 55–84 and 95–124; these read GRIH…VDWK and LNYS…MTEE. Cysteine 64, cysteine 67, cysteine 70, cysteine 74, cysteine 104, cysteine 107, cysteine 110, and cysteine 114 together coordinate [4Fe-4S] cluster.

Belongs to the complex I 23 kDa subunit family. As to quaternary structure, NDH is composed of at least 16 different subunits, 5 of which are encoded in the nucleus. [4Fe-4S] cluster serves as cofactor.

It localises to the plastid. The protein resides in the chloroplast thylakoid membrane. The catalysed reaction is a plastoquinone + NADH + (n+1) H(+)(in) = a plastoquinol + NAD(+) + n H(+)(out). It catalyses the reaction a plastoquinone + NADPH + (n+1) H(+)(in) = a plastoquinol + NADP(+) + n H(+)(out). NDH shuttles electrons from NAD(P)H:plastoquinone, via FMN and iron-sulfur (Fe-S) centers, to quinones in the photosynthetic chain and possibly in a chloroplast respiratory chain. The immediate electron acceptor for the enzyme in this species is believed to be plastoquinone. Couples the redox reaction to proton translocation, and thus conserves the redox energy in a proton gradient. In Enydra sessilis (Smallray swampwort), this protein is NAD(P)H-quinone oxidoreductase subunit I, chloroplastic.